Consider the following 400-residue polypeptide: CCA-adding enzyme (400 aa).

ATP contacts are provided by G32 and R35. 2 residues coordinate CTP: G32 and R35. The Mg(2+) site is built by D45 and D47. ATP contacts are provided by R116, D159, R162, R165, and R168. CTP-binding residues include R116, D159, R162, R165, and R168.

It belongs to the tRNA nucleotidyltransferase/poly(A) polymerase family. Bacterial CCA-adding enzyme type 3 subfamily. As to quaternary structure, homodimer. The cofactor is Mg(2+).

The catalysed reaction is a tRNA precursor + 2 CTP + ATP = a tRNA with a 3' CCA end + 3 diphosphate. The enzyme catalyses a tRNA with a 3' CCA end + 2 CTP + ATP = a tRNA with a 3' CCACCA end + 3 diphosphate. Its function is as follows. Catalyzes the addition and repair of the essential 3'-terminal CCA sequence in tRNAs without using a nucleic acid template. Adds these three nucleotides in the order of C, C, and A to the tRNA nucleotide-73, using CTP and ATP as substrates and producing inorganic pyrophosphate. tRNA 3'-terminal CCA addition is required both for tRNA processing and repair. Also involved in tRNA surveillance by mediating tandem CCA addition to generate a CCACCA at the 3' terminus of unstable tRNAs. While stable tRNAs receive only 3'-terminal CCA, unstable tRNAs are marked with CCACCA and rapidly degraded. The chain is CCA-adding enzyme from Limosilactobacillus fermentum (strain NBRC 3956 / LMG 18251) (Lactobacillus fermentum).